A 215-amino-acid chain; its full sequence is uncharacterized protein (215 aa).

Transmembrane regions (helical) follow at residues 40 to 60 and 72 to 92; these read VLFPIPVFCSIKVLLDYFCSL and LIWFYVLSVILCKSLFAVGYL.

The protein localises to the mitochondrion membrane. This is an uncharacterized protein from Arabidopsis thaliana (Mouse-ear cress).